The following is a 300-amino-acid chain: 3-hydroxy-3-isohexenylglutaryl-CoA/hydroxy-methylglutaryl-CoA lyase (300 aa).

Residues 7–274 (VRLVEVGPRD…HTGVDMHALV (268 aa)) form the Pyruvate carboxyltransferase domain. Arginine 15 contributes to the substrate binding site. Aspartate 16, histidine 207, and histidine 209 together coordinate a divalent metal cation. Residue cysteine 240 is part of the active site. Residue asparagine 249 coordinates a divalent metal cation.

This sequence belongs to the HMG-CoA lyase family. In terms of assembly, homodimer. Mg(2+) serves as cofactor. Requires Mn(2+) as cofactor.

The enzyme catalyses 3-hydroxy-3-(4-methylpent-3-en-1-yl)glutaryl-CoA = 7-methyl-3-oxooct-6-enoyl-CoA + acetate. It catalyses the reaction (3S)-3-hydroxy-3-methylglutaryl-CoA = acetoacetate + acetyl-CoA. Its pathway is metabolic intermediate metabolism; (S)-3-hydroxy-3-methylglutaryl-CoA degradation; acetoacetate from (S)-3-hydroxy-3-methylglutaryl-CoA: step 1/1. Functionally, involved in the L-leucine, isovalerate and acyclic monoterpene catabolism. Catalyzes the cleavage of 3-hydroxy-3-methylglutaryl-CoA (HMG-CoA) to yield acetyl-CoA and acetoacetate. It can also catalyze the cleavage of 3-hydroxy-3-isohexenylglutaryl-CoA (HIHG_CoA) to yield 7-methyl-3-oxooct-6-enoyl-CoA and acetate. This is 3-hydroxy-3-isohexenylglutaryl-CoA/hydroxy-methylglutaryl-CoA lyase from Pseudomonas aeruginosa (strain ATCC 15692 / DSM 22644 / CIP 104116 / JCM 14847 / LMG 12228 / 1C / PRS 101 / PAO1).